We begin with the raw amino-acid sequence, 183 residues long: Neuronal synaptobrevin (183 aa).

The segment covering 1–17 (MADAAPAGDAPPNAGAP) has biased composition (low complexity). Positions 1 to 32 (MADAAPAGDAPPNAGAPAGEGGDGEIVGGPHN) are disordered. Residues 1 to 106 (MADAAPAGDA…KFWLQNLKMM (106 aa)) lie on the Cytoplasmic side of the membrane. Residues 18-27 (AGEGGDGEIV) are compositionally biased toward gly residues. Residues 41-101 (RLQQTQAQVD…GKLKRKFWLQ (61 aa)) form the v-SNARE coiled-coil homology domain. The chain crosses the membrane as a helical span at residues 107 to 127 (IIMGVIGLVVVGIIANKLGLI). Over 128-183 (GGEQPPQYQYPPQYMQPPPPPPQQPAGGQSSLVDAAGAGDGAGAGGSAGAGDHGGV) the chain is Vesicular. The interval 135-183 (YQYPPQYMQPPPPPPQQPAGGQSSLVDAAGAGDGAGAGGSAGAGDHGGV) is disordered. Over residues 141–151 (YMQPPPPPPQQ) the composition is skewed to pro residues. The span at 165–183 (AGDGAGAGGSAGAGDHGGV) shows a compositional bias: gly residues.

Belongs to the synaptobrevin family. In terms of assembly, part of the SNARE core complex containing Snap25 and syntaxin. As to expression, specifically expressed in neurons and synapses.

It localises to the cytoplasmic vesicle. The protein resides in the secretory vesicle. Its subcellular location is the synaptic vesicle membrane. The protein localises to the early endosome membrane. In terms of biological role, involved in the targeting and/or fusion of transport vesicles to their target membrane. Major SNARE protein of synaptic vesicles which mediates fusion of synaptic vesicles to release neurotransmitters. Essential for fast vesicular exocytosis and activity-dependent neurotransmitter release as well as fast endocytosis that mediates rapid reuse of synaptic vesicles. Also involved in a neuron-specific sort-and-degrade mechanism that promotes endolysosomal degradation and is required for neuronal maintenance. The protein is Neuronal synaptobrevin of Drosophila melanogaster (Fruit fly).